The following is a 438-amino-acid chain: Cyanidin-3-O-glucoside 2-O-glucuronosyltransferase (438 aa).

Residues Ser264, 315 to 316 (WV), 333 to 341 (HCGWSSTME), and 355 to 358 (QFDQ) contribute to the UDP-alpha-D-glucuronate site.

This sequence belongs to the UDP-glycosyltransferase family. As to quaternary structure, monomer. As to expression, expressed in petals. Not detected in sepals, stems, leaves, tubular corollas and white petals.

It is found in the cytoplasm. The enzyme catalyses cyanidin 3-O-beta-D-glucoside + UDP-alpha-D-glucuronate = cyanidin 3-O-(2-O-beta-D-glucuronosyl)-beta-D-glucoside + UDP + H(+). Inhibited by copper, mercury, UDP, UTP and partially by calcium, cadmium, iron and UMP. Not affected by cobalt, magnesium, manganese, zinc, nickel, tin, uridine, sadium malonate and glucose. Its function is as follows. Involved in the production of glucuronosylated anthocyanins that are the origin of the red coloration of flowers. Can use cyanidin 3-O-6''-O-malonylglucoside, cyanidin 3-O-glucoside and delphinidin 3-O-glucosideas substrates, but not pelargonidin 3-O-glucoside, cyanidin 3-O-3'',6''-O-dimalonylglucoside, pelargonidin 3,5-O-diglucoside, pelargonidin 3-O-6''-O-malonylglucoside-5-O-glucoside, quercetin 3-O-glucoside, quercetin 3-O-6''-O-malonylglucoside, daidzin, genistin,7-O-6''-O-malonylglucosides of daidzein and genistein, cyanidin, quercetin, daidzein, genistein p-Nitrophenyl beta-D-glucopyranoside, beta-estradiol, 17alpha-estradiol, 1-naphthol, 2-naphthol, 4-methylumbelliferone, and p-nitrophenol. Highly specific for UDP-glucuronate (UDP-GlcUA). Arg-25 is decisive with respect to UDP-sugar specificity. The chain is Cyanidin-3-O-glucoside 2-O-glucuronosyltransferase (UGAT) from Bellis perennis (English daisy).